Here is a 67-residue protein sequence, read N- to C-terminus: Sodium channel neurotoxin MeuNaTxalpha-10 (67 aa).

An LCN-type CS-alpha/beta domain is found at 2–66 (RDGYIAKPHN…VPIRIPGKCH (65 aa)). Disulfide bonds link Cys12–Cys65, Cys16–Cys38, Cys24–Cys48, and Cys28–Cys50. Arg67 is a propeptide (removed by a carboxypeptidase).

Belongs to the long (4 C-C) scorpion toxin superfamily. Sodium channel inhibitor family. Alpha subfamily. Expressed by the venom gland.

It is found in the secreted. In terms of biological role, alpha toxins bind voltage-independently at site-3 of sodium channels (Nav) and inhibit the inactivation of the activated channels, thereby blocking neuronal transmission. The sequence is that of Sodium channel neurotoxin MeuNaTxalpha-10 from Mesobuthus eupeus (Lesser Asian scorpion).